The primary structure comprises 703 residues: Polyribonucleotide nucleotidyltransferase (703 aa).

Residues aspartate 489 and aspartate 495 each contribute to the Mg(2+) site. Residues 556-615 (PTMIAMKIDTDKIRDVIGKGGATIRAICEETKASIDIEDDGSIKIFGETKEAAEAARQRV) enclose the KH domain. Residues 625–693 (GKIYVGKVER…NRGRIKLSIK (69 aa)) form the S1 motif domain.

Belongs to the polyribonucleotide nucleotidyltransferase family. As to quaternary structure, component of the RNA degradosome, which is a multiprotein complex involved in RNA processing and mRNA degradation. It depends on Mg(2+) as a cofactor.

The protein localises to the cytoplasm. It carries out the reaction RNA(n+1) + phosphate = RNA(n) + a ribonucleoside 5'-diphosphate. Functionally, involved in mRNA degradation. Catalyzes the phosphorolysis of single-stranded polyribonucleotides processively in the 3'- to 5'-direction. In Pseudomonas fluorescens (strain ATCC BAA-477 / NRRL B-23932 / Pf-5), this protein is Polyribonucleotide nucleotidyltransferase.